A 1100-amino-acid chain; its full sequence is DNA-directed RNA polymerase subunit beta (1100 aa).

A disordered region spans residues 1064–1100 (YEEDKEVDLMADVNQRRTPSRPTYESMSVGDIDDDDD). The segment covering 1079–1089 (RRTPSRPTYES) has biased composition (polar residues).

This sequence belongs to the RNA polymerase beta chain family. As to quaternary structure, in cyanobacteria the RNAP catalytic core is composed of 2 alpha, 1 beta, 1 beta', 1 gamma and 1 omega subunit. When a sigma factor is associated with the core the holoenzyme is formed, which can initiate transcription.

The enzyme catalyses RNA(n) + a ribonucleoside 5'-triphosphate = RNA(n+1) + diphosphate. DNA-dependent RNA polymerase catalyzes the transcription of DNA into RNA using the four ribonucleoside triphosphates as substrates. This chain is DNA-directed RNA polymerase subunit beta, found in Synechococcus sp. (strain ATCC 27144 / PCC 6301 / SAUG 1402/1) (Anacystis nidulans).